A 403-amino-acid chain; its full sequence is Chorismate synthase (403 aa).

NADP(+) contacts are provided by R40 and R46. Residues 140 to 142 (RSS) and 261 to 262 (QA) contribute to the FMN site. Residues 277–298 (RRGSEAHDEMVRTDEGVDRETN) are compositionally biased toward basic and acidic residues. Positions 277 to 307 (RRGSEAHDEMVRTDEGVDRETNRAGGLEGGM) are disordered. Residues G305, 320 to 324 (KPIST), and R346 each bind FMN.

The protein belongs to the chorismate synthase family. As to quaternary structure, homotetramer. FMNH2 serves as cofactor.

It carries out the reaction 5-O-(1-carboxyvinyl)-3-phosphoshikimate = chorismate + phosphate. It participates in metabolic intermediate biosynthesis; chorismate biosynthesis; chorismate from D-erythrose 4-phosphate and phosphoenolpyruvate: step 7/7. In terms of biological role, catalyzes the anti-1,4-elimination of the C-3 phosphate and the C-6 proR hydrogen from 5-enolpyruvylshikimate-3-phosphate (EPSP) to yield chorismate, which is the branch point compound that serves as the starting substrate for the three terminal pathways of aromatic amino acid biosynthesis. This reaction introduces a second double bond into the aromatic ring system. The chain is Chorismate synthase from Corynebacterium aurimucosum (strain ATCC 700975 / DSM 44827 / CIP 107346 / CN-1) (Corynebacterium nigricans).